The chain runs to 138 residues: ATP synthase epsilon chain (138 aa).

This sequence belongs to the ATPase epsilon chain family. In terms of assembly, F-type ATPases have 2 components, CF(1) - the catalytic core - and CF(0) - the membrane proton channel. CF(1) has five subunits: alpha(3), beta(3), gamma(1), delta(1), epsilon(1). CF(0) has three main subunits: a, b and c.

The protein resides in the cell inner membrane. Produces ATP from ADP in the presence of a proton gradient across the membrane. The protein is ATP synthase epsilon chain of Psychrobacter sp. (strain PRwf-1).